Reading from the N-terminus, the 293-residue chain is Pyridoxal 5'-phosphate synthase subunit PdxS (293 aa).

Residue Asp-23 coordinates D-ribose 5-phosphate. Lys-80 acts as the Schiff-base intermediate with D-ribose 5-phosphate in catalysis. Gly-152 serves as a coordination point for D-ribose 5-phosphate. Arg-164 contacts D-glyceraldehyde 3-phosphate. D-ribose 5-phosphate contacts are provided by residues Gly-213 and 234–235; that span reads GS.

The protein belongs to the PdxS/SNZ family. As to quaternary structure, in the presence of PdxT, forms a dodecamer of heterodimers.

It carries out the reaction aldehydo-D-ribose 5-phosphate + D-glyceraldehyde 3-phosphate + L-glutamine = pyridoxal 5'-phosphate + L-glutamate + phosphate + 3 H2O + H(+). It participates in cofactor biosynthesis; pyridoxal 5'-phosphate biosynthesis. Functionally, catalyzes the formation of pyridoxal 5'-phosphate from ribose 5-phosphate (RBP), glyceraldehyde 3-phosphate (G3P) and ammonia. The ammonia is provided by the PdxT subunit. Can also use ribulose 5-phosphate and dihydroxyacetone phosphate as substrates, resulting from enzyme-catalyzed isomerization of RBP and G3P, respectively. The sequence is that of Pyridoxal 5'-phosphate synthase subunit PdxS from Roseiflexus castenholzii (strain DSM 13941 / HLO8).